The following is a 432-amino-acid chain: Trigger factor (432 aa).

Positions 161 to 246 constitute a PPIase FKBP-type domain; sequence EDRVTIDFTG…LKKVEERELP (86 aa).

It belongs to the FKBP-type PPIase family. Tig subfamily. As to quaternary structure, homodimer and monomer. In vivo most of the ribosomes are in complex with monomeric TF. Uncomplexed TF, however, is in a monomer-dimer equilibrium with approximately two thirds of TF existing in a dimeric state.

Its subcellular location is the cytoplasm. It carries out the reaction [protein]-peptidylproline (omega=180) = [protein]-peptidylproline (omega=0). Functionally, involved in protein export. Acts as a chaperone by maintaining the newly synthesized protein in an open conformation. Functions as a peptidyl-prolyl cis-trans isomerase. This is Trigger factor from Escherichia coli O6:K15:H31 (strain 536 / UPEC).